The following is a 118-amino-acid chain: MRIKFSVARHARKKKVLKRASGYYGDKSRRLRMATQQVDKSLVHAYTGRKDKKHQYRQLWITRINAAVREEGLNYSNFINGLAKSNITLNRKMLSEMAIQDPLSFKKLVDVAKQAIAK.

This sequence belongs to the bacterial ribosomal protein bL20 family.

Its function is as follows. Binds directly to 23S ribosomal RNA and is necessary for the in vitro assembly process of the 50S ribosomal subunit. It is not involved in the protein synthesizing functions of that subunit. This chain is Large ribosomal subunit protein bL20, found in Elusimicrobium minutum (strain Pei191).